The chain runs to 148 residues: Fluoride-specific ion channel FluC 2 (148 aa).

The next 4 membrane-spanning stretches (helical) occupy residues 23-43 (LGHL…RLAV), 61-81 (GTLA…TLIF), 92-112 (FWVL…LHTL), and 120-140 (LLGG…ALAG). Na(+)-binding residues include glycine 99 and threonine 102.

The protein belongs to the fluoride channel Fluc/FEX (TC 1.A.43) family.

It is found in the cell membrane. The enzyme catalyses fluoride(in) = fluoride(out). With respect to regulation, na(+) is not transported, but it plays an essential structural role and its presence is essential for fluoride channel function. Fluoride-specific ion channel. Important for reducing fluoride concentration in the cell, thus reducing its toxicity. In Rubrobacter xylanophilus (strain DSM 9941 / JCM 11954 / NBRC 16129 / PRD-1), this protein is Fluoride-specific ion channel FluC 2.